Reading from the N-terminus, the 325-residue chain is Acetyl-coenzyme A carboxylase carboxyl transferase subunit alpha (325 aa).

A CoA carboxyltransferase C-terminal domain is found at 44–298 (QLEARADQLR…KAAIQDNLQA (255 aa)).

This sequence belongs to the AccA family. Acetyl-CoA carboxylase is a heterohexamer composed of biotin carboxyl carrier protein (AccB), biotin carboxylase (AccC) and two subunits each of ACCase subunit alpha (AccA) and ACCase subunit beta (AccD).

Its subcellular location is the cytoplasm. The enzyme catalyses N(6)-carboxybiotinyl-L-lysyl-[protein] + acetyl-CoA = N(6)-biotinyl-L-lysyl-[protein] + malonyl-CoA. It participates in lipid metabolism; malonyl-CoA biosynthesis; malonyl-CoA from acetyl-CoA: step 1/1. In terms of biological role, component of the acetyl coenzyme A carboxylase (ACC) complex. First, biotin carboxylase catalyzes the carboxylation of biotin on its carrier protein (BCCP) and then the CO(2) group is transferred by the carboxyltransferase to acetyl-CoA to form malonyl-CoA. The polypeptide is Acetyl-coenzyme A carboxylase carboxyl transferase subunit alpha (Picosynechococcus sp. (strain ATCC 27264 / PCC 7002 / PR-6) (Agmenellum quadruplicatum)).